A 291-amino-acid polypeptide reads, in one-letter code: Nucleoid occlusion protein (291 aa).

A DNA-binding region (H-T-H motif) is located at residues 155–174; it reads EALAQRLGKGQSTVANKLRL.

It belongs to the ParB family.

It localises to the cytoplasm. The protein resides in the nucleoid. Effects nucleoid occlusion by binding relatively nonspecifically to DNA and preventing the assembly of the division machinery in the vicinity of the nucleoid, especially under conditions that disturb the cell cycle. It helps to coordinate cell division and chromosome segregation by preventing the formation of the Z ring through the nucleoid, which would cause chromosome breakage. This is Nucleoid occlusion protein from Bacillus pumilus (strain SAFR-032).